A 449-amino-acid chain; its full sequence is Protein translocase subunit SecD (449 aa).

Helical transmembrane passes span 6 to 26, 272 to 292, 294 to 314, 317 to 337, 379 to 399, and 401 to 421; these read GLVF…VLPT, LAVK…IAFY, LPGL…LALF, VPVT…GMAV, TFIA…GAPV, and GFAV…IFVT.

Belongs to the SecD/SecF family. SecD subfamily. Forms a complex with SecF. Part of the essential Sec protein translocation apparatus which comprises SecA, SecYEG and auxiliary proteins SecDF. Other proteins may also be involved.

Its subcellular location is the cell membrane. In terms of biological role, part of the Sec protein translocase complex. Interacts with the SecYEG preprotein conducting channel. SecDF uses the proton motive force (PMF) to complete protein translocation after the ATP-dependent function of SecA. The sequence is that of Protein translocase subunit SecD from Dehalococcoides mccartyi (strain VS).